Consider the following 309-residue polypeptide: uncharacterized protein (309 aa).

This is an uncharacterized protein from Aedes vexans (Inland floodwater mosquito).